Here is a 188-residue protein sequence, read N- to C-terminus: CASP-like protein 4B3 (188 aa).

The tract at residues 1 to 21 (MSFSPASSEPHDAPAAAGSSV) is disordered. Residues 1-42 (MSFSPASSEPHDAPAAAGSSVPASRSIAERWKMEAAPIRARL) are Cytoplasmic-facing. A helical membrane pass occupies residues 43–63 (LLRAFAWLFSLLALVVMATDV). At 64–76 (HGRGGAQDFSTYP) the chain is on the extracellular side. The helical transmembrane segment at 77–97 (EYNYCLGMSIIALLYATAQLV) threads the bilayer. Residues 98 to 114 (RDAHRLSSGRDLVAGRK) are Cytoplasmic-facing. The chain crosses the membrane as a helical span at residues 115 to 135 (AAAVVDFAGDQVVAYSLISGL). Residues 136–156 (SAAAPVTDYMRQATDNLFNDS) are Extracellular-facing. N154 carries an N-linked (GlcNAc...) asparagine glycan. The chain crosses the membrane as a helical span at residues 157 to 177 (AAAAISLAFFAFLAISLSALI). Residues 178–188 (SGYNLSLEAIV) are Cytoplasmic-facing.

Belongs to the Casparian strip membrane proteins (CASP) family. Homodimer and heterodimers.

It is found in the cell membrane. In Hordeum vulgare subsp. vulgare (Domesticated barley), this protein is CASP-like protein 4B3.